Reading from the N-terminus, the 515-residue chain is Integrator complex subunit 14 (515 aa).

The VWFA domain occupies 2–204 (PTVVVMDVSL…KNVQSMFGKL (203 aa)). The Mg(2+) site is built by S10, S12, and T86. K418 carries the N6-acetyllysine modification.

The protein belongs to the Integrator subunit 14 family. Component of the Integrator complex, composed of core subunits INTS1, INTS2, INTS3, INTS4, INTS5, INTS6, INTS7, INTS8, INTS9/RC74, INTS10, INTS11/CPSF3L, INTS12, INTS13, INTS14 and INTS15. The core complex associates with protein phosphatase 2A subunits PPP2CA and PPP2R1A, to form the Integrator-PP2A (INTAC) complex. INTS14 is part of the tail subcomplex, composed of INTS10, INTS13, INTS14 and INTS15.

It localises to the nucleus. In terms of biological role, component of the integrator complex, a multiprotein complex that terminates RNA polymerase II (Pol II) transcription in the promoter-proximal region of genes. The integrator complex provides a quality checkpoint during transcription elongation by driving premature transcription termination of transcripts that are unfavorably configured for transcriptional elongation: the complex terminates transcription by (1) catalyzing dephosphorylation of the C-terminal domain (CTD) of Pol II subunit POLR2A/RPB1 and SUPT5H/SPT5, (2) degrading the exiting nascent RNA transcript via endonuclease activity and (3) promoting the release of Pol II from bound DNA. The integrator complex is also involved in terminating the synthesis of non-coding Pol II transcripts, such as enhancer RNAs (eRNAs), small nuclear RNAs (snRNAs), telomerase RNAs and long non-coding RNAs (lncRNAs). Within the integrator complex, INTS14 is part of the integrator tail module that acts as a platform for the recruitment of transcription factors at promoters. In Rattus norvegicus (Rat), this protein is Integrator complex subunit 14.